An 81-amino-acid polypeptide reads, in one-letter code: Serine protease inhibitor Kazal-type 2 (81 aa).

The first 21 residues, 1–21 (MALAVLRLALLLLAVTFAGPL), serve as a signal peptide directing secretion. The region spanning 27 to 81 (KYKTPFCARYQLPGCPRDFNPVCGTDMITYPNECTLCMKIRESGQNIKILRRGPC) is the Kazal-like domain. 3 cysteine pairs are disulfide-bonded: Cys33/Cys63, Cys41/Cys60, and Cys49/Cys81.

More abundant in epididymis than in testis.

The protein localises to the secreted. It localises to the cytoplasmic vesicle. The protein resides in the secretory vesicle. It is found in the acrosome. Its function is as follows. Strong inhibitor of acrosin in male and/or female genital tract. Also inhibits trypsin. Functionally, as a strong inhibitor of acrosin, it is required for normal spermiogenesis. It probably hinders premature activation of proacrosin and other proteases, thus preventing the cascade of events leading to spermiogenesis defects. May be involved in the regulation of serine protease-dependent germ cell apoptosis. It also inhibits trypsin. The chain is Serine protease inhibitor Kazal-type 2 (SPINK2) from Macaca fascicularis (Crab-eating macaque).